Consider the following 225-residue polypeptide: Redox-sensing transcriptional repressor Rex (225 aa).

The segment at residues 16–55 is a DNA-binding region (H-T-H motif); the sequence is IYYRYLNILLDADKKRVSSTELSEAVKVDSATIRRDFSYF. Residue 90–95 coordinates NAD(+); the sequence is GVGNLG.

The protein belongs to the transcriptional regulatory Rex family. As to quaternary structure, homodimer.

The protein localises to the cytoplasm. Functionally, modulates transcription in response to changes in cellular NADH/NAD(+) redox state. The protein is Redox-sensing transcriptional repressor Rex of Lactiplantibacillus plantarum (strain ATCC BAA-793 / NCIMB 8826 / WCFS1) (Lactobacillus plantarum).